A 356-amino-acid polypeptide reads, in one-letter code: Septin-2A (356 aa).

In terms of domain architecture, Septin-type G spans 33–305 (KGFEFTLMVV…ENFRSERLKK (273 aa)). The G1 motif stretch occupies residues 43 to 50 (GESGLGKS). GTP is bound by residues 43–50 (GESGLGKS), T77, G103, 182–190 (KADTLTLRE), G240, and R255. The segment at 100 to 103 (DTPG) is G3 motif. The G4 motif stretch occupies residues 181-184 (AKAD). Positions 259-269 (WGVVEVENTEH) are important for dimerization.

Belongs to the TRAFAC class TrmE-Era-EngA-EngB-Septin-like GTPase superfamily. Septin GTPase family. Septins polymerize into heterooligomeric protein complexes that form filaments, and associate with cellular membranes, actin filaments and microtubules. GTPase activity is required for filament formation. Can form heterooligomers with other family members and form filaments. Interacts with wdpcp.

It localises to the cytoplasm. Its subcellular location is the cytoskeleton. The protein resides in the spindle. The protein localises to the cleavage furrow. It is found in the midbody. It localises to the cell projection. Its subcellular location is the cilium membrane. Its function is as follows. Filament-forming cytoskeletal GTPase. Required for normal organization of the actin cytoskeleton. Plays a role in the biogenesis of polarized columnar-shaped epithelium. Required for the progression through mitosis through regulation of chromosome congression. During anaphase, may be required for chromosome segregation and spindle elongation. Probably plays a role in ciliogenesis and collective cell movements including convergent extension during gastrulation. In cilia, required for the integrity of the diffusion barrier at the base of the primary cilium that prevents diffusion of transmembrane proteins between the cilia and plasma membranes. Controls cell shape and not polarization of cells during convergent extension. The chain is Septin-2A (sept2-a) from Xenopus laevis (African clawed frog).